Reading from the N-terminus, the 380-residue chain is Lipid-A-disaccharide synthase (380 aa).

This sequence belongs to the LpxB family.

It catalyses the reaction a lipid X + a UDP-2-N,3-O-bis[(3R)-3-hydroxyacyl]-alpha-D-glucosamine = a lipid A disaccharide + UDP + H(+). It functions in the pathway bacterial outer membrane biogenesis; LPS lipid A biosynthesis. In terms of biological role, condensation of UDP-2,3-diacylglucosamine and 2,3-diacylglucosamine-1-phosphate to form lipid A disaccharide, a precursor of lipid A, a phosphorylated glycolipid that anchors the lipopolysaccharide to the outer membrane of the cell. This is Lipid-A-disaccharide synthase from Pseudomonas savastanoi pv. phaseolicola (strain 1448A / Race 6) (Pseudomonas syringae pv. phaseolicola (strain 1448A / Race 6)).